Consider the following 270-residue polypeptide: uncharacterized protein (270 aa).

A signal peptide spans methionine 1–arginine 23.

This is an uncharacterized protein from Archaeoglobus fulgidus (strain ATCC 49558 / DSM 4304 / JCM 9628 / NBRC 100126 / VC-16).